The primary structure comprises 83 residues: MNKVVSINIAEILKSHATHKSLMVRNKNFLRSSNGSVPIYSNSILQPPTTATNNNNENNFNLVNDTIDDLELAIENAGGKQFW.

This is an uncharacterized protein from Dictyostelium discoideum (Social amoeba).